The sequence spans 239 residues: Norbelladine 4'-O-methyltransferase (239 aa).

Residues Val55, Glu77, 79 to 80 (GV), Ser85, Asp103, and Ala132 each bind S-adenosyl-L-methionine. Asp155 is an a divalent metal cation binding site. Asp157 lines the S-adenosyl-L-methionine pocket. Positions 181 and 182 each coordinate a divalent metal cation.

This sequence belongs to the class I-like SAM-binding methyltransferase superfamily. Cation-dependent O-methyltransferase family. Requires Mg(2+) as cofactor. Mostly expressed in bulbs, and, to a lower extent, in stems and roots.

It catalyses the reaction norbelladine + S-adenosyl-L-methionine = 4'-O-methylnorbelladine + S-adenosyl-L-homocysteine + H(+). Its pathway is alkaloid biosynthesis. 4'-O-methyltransferase converting norbelladine to 4'-O-methylnorbelladine. 4'-O-methylnorbelladine is a precursor to all Amaryllidaceae alkaloids such as galanthamine, lycorine and haemanthamine, and including haemanthamine- and crinamine-type alkaloids, promising anticancer agents. In Narcissus pseudonarcissus (Daffodil), this protein is Norbelladine 4'-O-methyltransferase.